The chain runs to 784 residues: uncharacterized protein (784 aa).

A 3'-5' exonuclease domain is found at Ile-422–Val-619.

This is an uncharacterized protein from Caenorhabditis elegans.